The sequence spans 690 residues: Eukaryotic translation initiation factor 3 subunit B (690 aa).

Residues 1–37 form a disordered region; that stretch reads MAKKKSEEQSSADANDSDYQEEPNFEDPPGFVDNISD. Acidic residues predominate over residues 15–25; sequence NDSDYQEEPNF. In terms of domain architecture, RRM spans 57–141; it reads SVVVVDNIPK…HTFAVNLFTD (85 aa). 5 WD repeats span residues 207–246, 293–331, 334–369, 442–484, and 530–575; these read TRERFTDTFVKWSPLGTYVVTFHKPGVAIWGGSSFQKIQK, DGMSVLSMFRWSHDDKFVARMGENSIHIYETPSFYLLDL, IKIPGIRGFSWSPTDNVIAYWVEEQNQIPARVTLME, EIRE…KPSL, and PDHF…IKRT. A coiled-coil region spans residues 595–645; it reads EEKQKEIKKNLKKYYAAFEQKDRLRLTRASKELLEKRSQLRETFMEYRNKR.

It belongs to the eIF-3 subunit B family. Component of the eukaryotic translation initiation factor 3 (eIF-3) complex. The eIF-3 complex interacts with pix. Interacts with mxt.

The protein localises to the cytoplasm. In terms of biological role, RNA-binding component of the eukaryotic translation initiation factor 3 (eIF-3) complex, which is involved in protein synthesis of a specialized repertoire of mRNAs and, together with other initiation factors, stimulates binding of mRNA and methionyl-tRNAi to the 40S ribosome. The eIF-3 complex specifically targets and initiates translation of a subset of mRNAs involved in cell proliferation. The chain is Eukaryotic translation initiation factor 3 subunit B from Drosophila sechellia (Fruit fly).